We begin with the raw amino-acid sequence, 564 residues long: Ribulokinase (564 aa).

Belongs to the ribulokinase family.

The catalysed reaction is D-ribulose + ATP = D-ribulose 5-phosphate + ADP + H(+). It catalyses the reaction L-ribulose + ATP = L-ribulose 5-phosphate + ADP + H(+). Its pathway is carbohydrate degradation; L-arabinose degradation via L-ribulose; D-xylulose 5-phosphate from L-arabinose (bacterial route): step 2/3. This chain is Ribulokinase, found in Geobacillus thermodenitrificans (strain NG80-2).